We begin with the raw amino-acid sequence, 272 residues long: Alkaline ceramidase (272 aa).

Transmembrane regions (helical) follow at residues 34–54 (FANT…IMLL) and 61–81 (VNGG…ASTY). His-83 lines the Zn(2+) pocket. Helical transmembrane passes span 96 to 116 (LSLV…MKWF), 124 to 144 (LTVV…LCFL), 148 to 168 (LNAI…RYEG), and 183 to 203 (ILAL…LCDF). Zn(2+) is bound by residues His-213 and His-217. Residues 214–234 (ALFHLLAGLAGYTIFIMFSMI) traverse the membrane as a helical segment. Asn-256 is a glycosylation site (N-linked (GlcNAc...) asparagine).

This sequence belongs to the alkaline ceramidase family. It depends on Zn(2+) as a cofactor.

The protein resides in the membrane. It catalyses the reaction an N-acylsphing-4-enine + H2O = sphing-4-enine + a fatty acid. In terms of biological role, hydrolyzes the sphingolipid ceramide into sphingosine and free fatty acid. The protein is Alkaline ceramidase of Caenorhabditis briggsae.